Reading from the N-terminus, the 723-residue chain is Hypoxia-inducible factor prolyl hydroxylase (723 aa).

8 residues coordinate Zn(2+): cysteine 39, cysteine 42, cysteine 54, cysteine 57, cysteine 63, histidine 67, histidine 75, and cysteine 79. The MYND-type; atypical zinc finger occupies 39–79 (CTYCGSSCTSSQLQTCLFCGTVAYCSKEHQQLDWLTHKMIC). Residues 249–270 (PSTASTATIPPPATTTSSATSS) are compositionally biased toward low complexity. Disordered regions lie at residues 249–275 (PSTA…KSET) and 294–323 (IETE…KINY). Residues 468-566 (GRSRAMLAIY…RFAITIWYMD (99 aa)) form the Fe2OG dioxygenase domain. Fe cation contacts are provided by histidine 487, aspartate 489, and histidine 548. Position 557 (arginine 557) interacts with 2-oxoglutarate. Residues 678-723 (RTTSLQSISDHFRSERSHERRSSTSSDQDLDEGLPPPPSTNPEYYI) form a disordered region. Positions 687–699 (DHFRSERSHERRS) are enriched in basic and acidic residues.

As to quaternary structure, interacts (via catalytic domain) with lin-10 (via N-terminus); the interaction regulates lin-10 subcellular localization; the interaction is direct. Interacts (via catalytic domain) with swan-1 (via WD 1-3 repeats); the interaction may regulate vhl-1-independent hif-1 transcriptional activity; the interaction is direct. Interacts (via C-terminus) with cysl-1; the interaction is enhanced by hydrogen disulfide and activates hif-1-mediated transcription; the interaction is direct. Requires Fe(2+) as cofactor. L-ascorbate is required as a cofactor. As to expression, in larvae and adults, expressed in pharyngeal and body wall muscles.

The protein localises to the cytoplasm. It localises to the nucleus. It is found in the cell projection. Its subcellular location is the dendrite. The protein resides in the axon. The catalysed reaction is L-prolyl-[hypoxia-inducible factor alpha subunit] + 2-oxoglutarate + O2 = trans-4-hydroxy-L-prolyl-[hypoxia-inducible factor alpha subunit] + succinate + CO2. With respect to regulation, inhibited by Co(2+) and dimethyloxalylglycine. Inhibited by the iron chelator 2, 2'-dipyridyl. Its function is as follows. Cellular oxygen sensor which regulates the stability and the activity of hypoxia-inducible transcription factor, hif-1. In normoxic conditions, hydroxylates hif-1 targeting it for vhl-1-mediated proteasomal degradation. In addition, regulates hif-1 transcriptional activity in a vhl-1-independent manner and independently of its hydroxylase activity. By regulating hif-1 activity, controls several cellular responses. Mediates susceptibility to B.thuringiensis and V.cholerae pore-forming toxins and enteropathogenic E.coli. Mediates susceptibility to P.aeruginosa PAO1-mediated killing by regulating resistance to cyanide produced by P.aeruginosa. Mediates resistance to S.aureus-mediated killing. In addition, plays a role in heat acclimation, neuronal development, behavioral responses to reoxygenation and hydrogen sulfide, iron homeostasis and aging. In neurons, involved in mitochondrion fusion during reoxygenation. Involved in egg laying. Functionally, regulates the trafficking of the glutamate receptor glr-1, probably independently of hif-1, by regulating lin-10 subcellular localization in response to oxygen levels. May hydroxylate lin-10. This chain is Hypoxia-inducible factor prolyl hydroxylase, found in Caenorhabditis elegans.